The primary structure comprises 414 residues: Glutamyl-tRNA reductase (414 aa).

Residues 49 to 52 (TCNR), Ser108, 113 to 115 (EPQ), and Gln119 contribute to the substrate site. Cys50 acts as the Nucleophile in catalysis. NADP(+) is bound at residue 188–193 (GAGQTG).

The protein belongs to the glutamyl-tRNA reductase family. In terms of assembly, homodimer.

It catalyses the reaction (S)-4-amino-5-oxopentanoate + tRNA(Glu) + NADP(+) = L-glutamyl-tRNA(Glu) + NADPH + H(+). It participates in porphyrin-containing compound metabolism; protoporphyrin-IX biosynthesis; 5-aminolevulinate from L-glutamyl-tRNA(Glu): step 1/2. Its function is as follows. Catalyzes the NADPH-dependent reduction of glutamyl-tRNA(Glu) to glutamate 1-semialdehyde (GSA). The polypeptide is Glutamyl-tRNA reductase (Francisella tularensis subsp. holarctica (strain LVS)).